A 250-amino-acid chain; its full sequence is Pyrroloquinoline-quinone synthase (250 aa).

This sequence belongs to the PqqC family.

It catalyses the reaction 6-(2-amino-2-carboxyethyl)-7,8-dioxo-1,2,3,4,7,8-hexahydroquinoline-2,4-dicarboxylate + 3 O2 = pyrroloquinoline quinone + 2 H2O2 + 2 H2O + H(+). It participates in cofactor biosynthesis; pyrroloquinoline quinone biosynthesis. Its function is as follows. Ring cyclization and eight-electron oxidation of 3a-(2-amino-2-carboxyethyl)-4,5-dioxo-4,5,6,7,8,9-hexahydroquinoline-7,9-dicarboxylic-acid to PQQ. The polypeptide is Pyrroloquinoline-quinone synthase (Xanthomonas campestris pv. campestris (strain 8004)).